A 323-amino-acid polypeptide reads, in one-letter code: 2-methylene-furan-3-one reductase (323 aa).

Residues Lys-59, 174–175 (GV), 197–200 (STKK), Tyr-216, Ile-254, 265–267 (FVL), and 312–313 (RA) contribute to the NADP(+) site. Lys-59 is a binding site for substrate.

It belongs to the zinc-containing alcohol dehydrogenase family. Quinone oxidoreductase subfamily. Monomer. The N-terminus is blocked. Expressed in parenchyma tissues of red fruits. Not found in vascular tissues. Also detected in the achenes.

The enzyme catalyses 4-hydroxy-2,5-dimethyl-furan-3(2H)-one + NADP(+) = 4-hydroxy-5-methyl-2-methylenefuran-3(2H)-one + NADPH + H(+). Its function is as follows. Enone oxidoreductase involved in the biosynthesis of 4-hydroxy-2,5-dimethyl-3(2H)-furanone (HDMF or furaneol), the key flavor compound in strawberries. Can use both NADH and NADPH as the electron donor. This chain is 2-methylene-furan-3-one reductase (EO), found in Fragaria ananassa (Strawberry).